We begin with the raw amino-acid sequence, 313 residues long: Ribosomal RNA small subunit methyltransferase H (313 aa).

S-adenosyl-L-methionine is bound by residues 35-37 (GGH), aspartate 55, phenylalanine 79, aspartate 101, and glutamine 108.

It belongs to the methyltransferase superfamily. RsmH family.

The protein resides in the cytoplasm. It catalyses the reaction cytidine(1402) in 16S rRNA + S-adenosyl-L-methionine = N(4)-methylcytidine(1402) in 16S rRNA + S-adenosyl-L-homocysteine + H(+). In terms of biological role, specifically methylates the N4 position of cytidine in position 1402 (C1402) of 16S rRNA. This Salmonella newport (strain SL254) protein is Ribosomal RNA small subunit methyltransferase H.